Consider the following 328-residue polypeptide: Biotin synthase (328 aa).

In terms of domain architecture, Radical SAM core spans 42-267; the sequence is YHVQLASLLS…LMPGSRVRLS (226 aa). [4Fe-4S] cluster contacts are provided by Cys-57, Cys-61, and Cys-64. The [2Fe-2S] cluster site is built by Cys-101, Cys-133, Cys-193, and Arg-265.

The protein belongs to the radical SAM superfamily. Biotin synthase family. Homodimer. It depends on [4Fe-4S] cluster as a cofactor. [2Fe-2S] cluster is required as a cofactor.

It carries out the reaction (4R,5S)-dethiobiotin + (sulfur carrier)-SH + 2 reduced [2Fe-2S]-[ferredoxin] + 2 S-adenosyl-L-methionine = (sulfur carrier)-H + biotin + 2 5'-deoxyadenosine + 2 L-methionine + 2 oxidized [2Fe-2S]-[ferredoxin]. Its pathway is cofactor biosynthesis; biotin biosynthesis; biotin from 7,8-diaminononanoate: step 2/2. In terms of biological role, catalyzes the conversion of dethiobiotin (DTB) to biotin by the insertion of a sulfur atom into dethiobiotin via a radical-based mechanism. The sequence is that of Biotin synthase from Synechococcus sp. (strain CC9311).